A 297-amino-acid polypeptide reads, in one-letter code: Acetylglutamate kinase (297 aa).

Residues 64–65, Arg86, and Asn190 each bind substrate; that span reads GG.

The protein belongs to the acetylglutamate kinase family. ArgB subfamily.

Its subcellular location is the cytoplasm. It carries out the reaction N-acetyl-L-glutamate + ATP = N-acetyl-L-glutamyl 5-phosphate + ADP. It functions in the pathway amino-acid biosynthesis; L-arginine biosynthesis; N(2)-acetyl-L-ornithine from L-glutamate: step 2/4. In terms of biological role, catalyzes the ATP-dependent phosphorylation of N-acetyl-L-glutamate. The polypeptide is Acetylglutamate kinase (Solidesulfovibrio magneticus (strain ATCC 700980 / DSM 13731 / RS-1) (Desulfovibrio magneticus)).